Here is a 364-residue protein sequence, read N- to C-terminus: Histidinol-phosphate aminotransferase 2 (364 aa).

Position 223 is an N6-(pyridoxal phosphate)lysine (K223).

The protein belongs to the class-II pyridoxal-phosphate-dependent aminotransferase family. Histidinol-phosphate aminotransferase subfamily. Homodimer. The cofactor is pyridoxal 5'-phosphate.

It catalyses the reaction L-histidinol phosphate + 2-oxoglutarate = 3-(imidazol-4-yl)-2-oxopropyl phosphate + L-glutamate. It participates in amino-acid biosynthesis; L-histidine biosynthesis; L-histidine from 5-phospho-alpha-D-ribose 1-diphosphate: step 7/9. This Oceanobacillus iheyensis (strain DSM 14371 / CIP 107618 / JCM 11309 / KCTC 3954 / HTE831) protein is Histidinol-phosphate aminotransferase 2 (hisC2).